The following is a 334-amino-acid chain: Beta-ketoacyl-[acyl-carrier-protein] synthase III (334 aa).

Catalysis depends on residues cysteine 114 and histidine 253. Positions 254-258 (QANIR) are ACP-binding. The active site involves asparagine 283.

It belongs to the thiolase-like superfamily. FabH family. In terms of assembly, homodimer.

Its subcellular location is the cytoplasm. The catalysed reaction is malonyl-[ACP] + acetyl-CoA + H(+) = 3-oxobutanoyl-[ACP] + CO2 + CoA. Its pathway is lipid metabolism; fatty acid biosynthesis. Catalyzes the condensation reaction of fatty acid synthesis by the addition to an acyl acceptor of two carbons from malonyl-ACP. Catalyzes the first condensation reaction which initiates fatty acid synthesis and may therefore play a role in governing the total rate of fatty acid production. Possesses both acetoacetyl-ACP synthase and acetyl transacylase activities. Its substrate specificity determines the biosynthesis of branched-chain and/or straight-chain of fatty acids. The protein is Beta-ketoacyl-[acyl-carrier-protein] synthase III of Campylobacter curvus (strain 525.92).